The chain runs to 195 residues: CASP-like protein 1B2 (195 aa).

Topologically, residues 1 to 25 (MDLEKGKKPSEQAAACRIMQVKDKL) are cytoplasmic. A helical transmembrane segment spans residues 26–46 (ITLQPVVRACVFLATAVAAVI). Residues 47–78 (MGLNKQSYTTVVAIVGTRPVTQTFTAKFKDTP) are Extracellular-facing. Residues 79–99 (AFVFFVIANAIASGYNLMVLV) traverse the membrane as a helical segment. Residues 100 to 114 (TRRILQRRAQSLSVH) are Cytoplasmic-facing. The chain crosses the membrane as a helical span at residues 115-135 (LLDMVILTLLATGSATAASMA). Topologically, residues 136–160 (QLGKNGNLHARWNPICDKFGSFCNH) are extracellular. The helical transmembrane segment at 161-181 (GGIALVSSFIGVALMLALNLL) threads the bilayer. Over 182 to 195 (SAAANSPRSNVTGQ) the chain is Cytoplasmic.

The protein belongs to the Casparian strip membrane proteins (CASP) family. In terms of assembly, homodimer and heterodimers.

It localises to the cell membrane. This is CASP-like protein 1B2 from Oryza sativa subsp. indica (Rice).